Here is a 430-residue protein sequence, read N- to C-terminus: Adenylosuccinate synthetase (430 aa).

Residues 12-18 (GDEGKGK) and 40-42 (GHT) contribute to the GTP site. Aspartate 13 serves as the catalytic Proton acceptor. Residues aspartate 13 and glycine 40 each coordinate Mg(2+). Residues 13–16 (DEGK), 38–41 (NAGH), threonine 128, arginine 142, glutamine 223, threonine 238, and arginine 302 contribute to the IMP site. Histidine 41 (proton donor) is an active-site residue. 298–304 (TTTGRPR) is a binding site for substrate. Residues arginine 304, 330 to 332 (SID), and 412 to 414 (SVG) each bind GTP.

It belongs to the adenylosuccinate synthetase family. In terms of assembly, homodimer. Mg(2+) is required as a cofactor.

It localises to the cytoplasm. The enzyme catalyses IMP + L-aspartate + GTP = N(6)-(1,2-dicarboxyethyl)-AMP + GDP + phosphate + 2 H(+). It participates in purine metabolism; AMP biosynthesis via de novo pathway; AMP from IMP: step 1/2. Its function is as follows. Plays an important role in the de novo pathway of purine nucleotide biosynthesis. Catalyzes the first committed step in the biosynthesis of AMP from IMP. The sequence is that of Adenylosuccinate synthetase from Enterococcus faecalis (strain ATCC 700802 / V583).